The primary structure comprises 153 residues: Ribosomal RNA large subunit methyltransferase H (153 aa).

S-adenosyl-L-methionine contacts are provided by residues Leu75, Gly102, and 121–126 (LSKLTL).

This sequence belongs to the RNA methyltransferase RlmH family. Homodimer.

The protein resides in the cytoplasm. The catalysed reaction is pseudouridine(1915) in 23S rRNA + S-adenosyl-L-methionine = N(3)-methylpseudouridine(1915) in 23S rRNA + S-adenosyl-L-homocysteine + H(+). Specifically methylates the pseudouridine at position 1915 (m3Psi1915) in 23S rRNA. This is Ribosomal RNA large subunit methyltransferase H from Campylobacter jejuni (strain RM1221).